The sequence spans 278 residues: DNA repair protein RecO (278 aa).

Positions 1–12 (MGTNDALTSTED) are enriched in polar residues. A disordered region spans residues 1–42 (MGTNDALTSTEDAVTAGANDAPLPAPPEPPRKARRATSRTSD).

The protein belongs to the RecO family.

Involved in DNA repair and RecF pathway recombination. This Burkholderia lata (strain ATCC 17760 / DSM 23089 / LMG 22485 / NCIMB 9086 / R18194 / 383) protein is DNA repair protein RecO.